The chain runs to 66 residues: Large ribosomal subunit protein bL33c (66 aa).

The protein belongs to the bacterial ribosomal protein bL33 family.

It localises to the plastid. The protein localises to the chloroplast. This Physcomitrium patens (Spreading-leaved earth moss) protein is Large ribosomal subunit protein bL33c.